A 116-amino-acid chain; its full sequence is NADPH-dependent 7-cyano-7-deazaguanine reductase (116 aa).

C31 serves as the catalytic Thioimide intermediate. Catalysis depends on D38, which acts as the Proton donor. Substrate-binding positions include 53 to 55 and 72 to 73; these read VEL and YE.

It belongs to the GTP cyclohydrolase I family. QueF type 1 subfamily.

It localises to the cytoplasm. It catalyses the reaction 7-aminomethyl-7-carbaguanine + 2 NADP(+) = 7-cyano-7-deazaguanine + 2 NADPH + 3 H(+). It functions in the pathway tRNA modification; tRNA-queuosine biosynthesis. In terms of biological role, catalyzes the NADPH-dependent reduction of 7-cyano-7-deazaguanine (preQ0) to 7-aminomethyl-7-deazaguanine (preQ1). This is NADPH-dependent 7-cyano-7-deazaguanine reductase from Chlorobium phaeovibrioides (strain DSM 265 / 1930) (Prosthecochloris vibrioformis (strain DSM 265)).